The following is a 164-amino-acid chain: Transcription elongation factor GreA (164 aa).

The stretch at 50 to 76 (YHAAREEQGQQEARIRQLQDLLSNAKV) forms a coiled coil.

It belongs to the GreA/GreB family.

Functionally, necessary for efficient RNA polymerase transcription elongation past template-encoded arresting sites. The arresting sites in DNA have the property of trapping a certain fraction of elongating RNA polymerases that pass through, resulting in locked ternary complexes. Cleavage of the nascent transcript by cleavage factors such as GreA or GreB allows the resumption of elongation from the new 3'terminus. GreA releases sequences of 2 to 3 nucleotides. The polypeptide is Transcription elongation factor GreA (Mycobacterium bovis (strain ATCC BAA-935 / AF2122/97)).